A 146-amino-acid polypeptide reads, in one-letter code: Acidic phospholipase A2 2 (146 aa).

The signal sequence occupies residues 1-21 (MTPAHLLILAAVCVSPLGASS). Residues 22-27 (SRPMPL) constitute a propeptide that is removed on maturation. 7 disulfides stabilise this stretch: cysteine 38–cysteine 98, cysteine 53–cysteine 145, cysteine 55–cysteine 71, cysteine 70–cysteine 126, cysteine 77–cysteine 119, cysteine 87–cysteine 112, and cysteine 105–cysteine 117. The Ca(2+) site is built by tyrosine 54, glycine 56, and glycine 58. Histidine 74 is an active-site residue. Aspartate 75 contributes to the Ca(2+) binding site. Aspartate 120 is a catalytic residue.

The protein belongs to the phospholipase A2 family. Group I subfamily. D49 sub-subfamily. It depends on Ca(2+) as a cofactor. In terms of tissue distribution, expressed by the venom gland.

The protein resides in the secreted. It catalyses the reaction a 1,2-diacyl-sn-glycero-3-phosphocholine + H2O = a 1-acyl-sn-glycero-3-phosphocholine + a fatty acid + H(+). Functionally, PLA2 catalyzes the calcium-dependent hydrolysis of the 2-acyl groups in 3-sn-phosphoglycerides. This chain is Acidic phospholipase A2 2, found in Naja atra (Chinese cobra).